The sequence spans 1221 residues: Adhesion G-protein coupled receptor G6 (1221 aa).

The N-terminal stretch at 1-37 (MMFRSDRMWSCHWKWKPSPLLFLFALYIMCVPHSVWG) is a signal peptide. Over 38 to 862 (CANCRVVLSN…ASQLDARNTK (825 aa)) the chain is Extracellular. A disulfide bridge links Cys41 with Cys67. In terms of domain architecture, CUB spans 41–149 (CRVVLSNPSG…KGFNASYIRV (109 aa)). Glu89 and Asp97 together coordinate Ca(2+). Cysteines 94 and 111 form a disulfide. The N-linked (GlcNAc...) asparagine glycan is linked to Asn121. Ca(2+) contacts are provided by Asp134, Ser136, and Ile137. Asn143, Asn206, Asn258, Asn314, Asn324, Asn353, Asn438, Asn445, Asn452, Asn485, Asn488, and Asn505 each carry an N-linked (GlcNAc...) asparagine glycan. In terms of domain architecture, Pentraxin (PTX) spans 154–356 (RNQKVILPQT…ALKAESNLSC (203 aa)). 2 cysteine pairs are disulfide-bonded: Cys186–Cys254 and Cys231–Cys277. A mediates interaction with laminin-2 region spans residues 473–837 (EPRLVLWALL…SDASETVCLC (365 aa)). 2 cysteine pairs are disulfide-bonded: Cys525-Cys560 and Cys548-Cys580. Asn563, Asn593, Asn600, Asn605, Asn667, Asn673, Asn695, Asn704, Asn750, Asn776, Asn811, and Asn818 each carry an N-linked (GlcNAc...) asparagine glycan. A GAIN-B domain is found at 670-853 (SHVNITTRNL…GVLMDLPRSA (184 aa)). 2 disulfide bridges follow: Cys803–Cys835 and Cys822–Cys837. Residues 803–853 (CAFWDLNKNKSFGGWNTSGCVAHRDSDASETVCLCNHFTHFGVLMDLPRSA) form a GPS region. Residues 842–850 (HFGVLMDLP) are stachel. Residues 863–883 (VLTFISYIGCGISAIFSAATL) traverse the membrane as a helical segment. The Cytoplasmic portion of the chain corresponds to 884–903 (LTYVAFEKLRRDYPSKILMN). The chain crosses the membrane as a helical span at residues 904 to 924 (LSTALLFLNLLFLLDGWITSF). Over 925–929 (NVDGL) the chain is Extracellular. A helical membrane pass occupies residues 930-950 (CIAVAVLLHFFLLATFTWMGL). Over 951-970 (EAIHMYIALVKVFNTYIRRY) the chain is Cytoplasmic. Residues 971 to 991 (ILKFCIIGWGLPALVVSVVLA) traverse the membrane as a helical segment. At 992–1024 (SRNNNEVYGKESYGKEKGDEFCWIQDPVIFYVT) the chain is on the extracellular side. A helical transmembrane segment spans residues 1025–1045 (CAGYFGVMFFLNIAMFIVVMV). Residues 1046 to 1069 (QICGRNGKRSNRTLREEVLRNLRS) lie on the Cytoplasmic side of the membrane. The chain crosses the membrane as a helical span at residues 1070–1090 (VVSLTFLLGMTWGFAFFAWGP). Residues 1091 to 1092 (LN) lie on the Extracellular side of the membrane. Residues 1093–1113 (IPFMYLFSIFNSLQGLFIFIF) traverse the membrane as a helical segment. 17alpha-hydroxyprogesterone is bound at residue Asn1103. Residues 1114 to 1221 (HCAMKENVQK…GQVLVKTGPC (108 aa)) lie on the Cytoplasmic side of the membrane. The interval 1156 to 1176 (NLGKSLSSSSIGSNSTYLTSK) is disordered. 2 positions are modified to phosphoserine: Ser1165 and Ser1168.

It belongs to the G-protein coupled receptor 2 family. Adhesion G-protein coupled receptor (ADGR) subfamily. As to quaternary structure, heterodimer of 2 chains generated by proteolytic processing; the large extracellular N-terminal fragment and the membrane-bound C-terminal fragment predominantly remain associated and non-covalently linked. Interacts with Laminin-2; this interaction stabilizes the receptor in an inactive state. Laminin-2 polymerization could facilitate ADGRG6-NTF removal, thereby exposing the tethered agonist to drive myelination. Interacts with PRNP. Interacts with ITGB1. Interacts with LRP1. Proteolytically cleaved into 2 conserved sites: one in the GPS region of the GAIN-B domain (S1 site) and the other in the middle of the extracellular domain (S2 site). The proteolytic cleavage at S1 site generates an extracellular subunit and a seven-transmembrane subunit. Furin is involved in the cleavage of the S2 site generating a soluble fragment. Processing at the GPS region occurred independent of and probably prior to the cleavage at the S2 site. Proteolytic cleavage is required for activation of the receptor. In terms of processing, highly glycosylated. Expressed in placenta and to a lower extent in pancreas and liver. Detected in aortic endothelial cells but not in skin microvascular endothelial cells.

Its subcellular location is the cell membrane. Its activity is regulated as follows. Forms a heterodimer of 2 chains generated by proteolytic processing that remain associated through non-covalent interactions mediated by the GAIN-B domain. In the inactivated receptor, the Stachel sequence (also named stalk) is embedded in the GAIN-B domain, where it adopts a beta-strand conformation. On activation, the Stachel moves into the 7 transmembrane region and adopts a twisted hook-shaped configuration that forms contacts within the receptor, leading to coupling of a G-alpha protein, which activates signaling. The cleaved GAIN-B and N-terminal domains can then dissociate from the rest of the receptor. Adhesion G-protein coupled receptor (aGPCR) for steroid hormones, such as progesterone and 17alpha-hydroxyprogesterone (17OHP). Involved in many biological processes, such as myelination, sprouting angiogenesis, placenta, ear and cartilage development. Ligand binding causes a conformation change that triggers signaling via guanine nucleotide-binding proteins (G proteins) and modulates the activity of downstream effectors, such as adenylate cyclase. ADGRG6 is coupled to G(i) G alpha proteins and mediates inhibition of adenylate cyclase. Also able to couple to G(q) G proteins. Involved in myelination of the peripheral nervous system: required for differentiation of promyelinating Schwann cells and for normal myelination of axons. Also acts as a regulator of body length and bone mass. Acts as a regulator of blood-brain barrier formation in the central nervous system vie its association with LRP1 and ITGB1. This Homo sapiens (Human) protein is Adhesion G-protein coupled receptor G6.